The following is a 160-amino-acid chain: Cytochrome b6-f complex subunit 4 (160 aa).

3 helical membrane passes run leucine 36–valine 56, leucine 95–glutamate 115, and threonine 131–isoleucine 151.

Belongs to the cytochrome b family. PetD subfamily. In terms of assembly, the 4 large subunits of the cytochrome b6-f complex are cytochrome b6, subunit IV (17 kDa polypeptide, petD), cytochrome f and the Rieske protein, while the 4 small subunits are petG, petL, petM and petN. The complex functions as a dimer.

The protein resides in the plastid. It localises to the chloroplast thylakoid membrane. In terms of biological role, component of the cytochrome b6-f complex, which mediates electron transfer between photosystem II (PSII) and photosystem I (PSI), cyclic electron flow around PSI, and state transitions. This chain is Cytochrome b6-f complex subunit 4, found in Chaetosphaeridium globosum (Charophycean green alga).